Here is a 428-residue protein sequence, read N- to C-terminus: Enolase (428 aa).

A (2R)-2-phosphoglycerate-binding site is contributed by glutamine 165. The active-site Proton donor is the glutamate 207. Positions 244, 285, and 312 each coordinate Mg(2+). (2R)-2-phosphoglycerate contacts are provided by lysine 337, arginine 366, serine 367, and lysine 388. The Proton acceptor role is filled by lysine 337.

Belongs to the enolase family. In terms of assembly, component of the RNA degradosome, a multiprotein complex involved in RNA processing and mRNA degradation. Mg(2+) serves as cofactor.

It localises to the cytoplasm. The protein localises to the secreted. It is found in the cell surface. It catalyses the reaction (2R)-2-phosphoglycerate = phosphoenolpyruvate + H2O. The protein operates within carbohydrate degradation; glycolysis; pyruvate from D-glyceraldehyde 3-phosphate: step 4/5. Its function is as follows. Catalyzes the reversible conversion of 2-phosphoglycerate (2-PG) into phosphoenolpyruvate (PEP). It is essential for the degradation of carbohydrates via glycolysis. In Coxiella burnetii (strain CbuK_Q154) (Coxiella burnetii (strain Q154)), this protein is Enolase.